The primary structure comprises 405 residues: S-adenosylmethionine synthase (405 aa).

H19 is an ATP binding site. D21 is a binding site for Mg(2+). Residue E47 coordinates K(+). E60 and Q103 together coordinate L-methionine. The segment at 103 to 113 (QSADIAQGVDK) is flexible loop. ATP is bound by residues 179–181 (DGK), 246–247 (RF), D255, 261–262 (RK), A278, and K282. Position 255 (D255) interacts with L-methionine. Residue K286 coordinates L-methionine.

Belongs to the AdoMet synthase family. As to quaternary structure, homotetramer; dimer of dimers. Mg(2+) is required as a cofactor. Requires K(+) as cofactor.

It localises to the cytoplasm. It catalyses the reaction L-methionine + ATP + H2O = S-adenosyl-L-methionine + phosphate + diphosphate. It functions in the pathway amino-acid biosynthesis; S-adenosyl-L-methionine biosynthesis; S-adenosyl-L-methionine from L-methionine: step 1/1. Its function is as follows. Catalyzes the formation of S-adenosylmethionine (AdoMet) from methionine and ATP. The overall synthetic reaction is composed of two sequential steps, AdoMet formation and the subsequent tripolyphosphate hydrolysis which occurs prior to release of AdoMet from the enzyme. This chain is S-adenosylmethionine synthase, found in Shouchella clausii (strain KSM-K16) (Alkalihalobacillus clausii).